A 166-amino-acid polypeptide reads, in one-letter code: Myosin regulatory light chain 2, ventricular/cardiac muscle isoform (166 aa).

Ala-2 is modified (n,N,N-trimethylalanine). A Deamidated asparagine modification is found at Asn-14. Ser-15 bears the Phosphoserine; by ZIPK/DAPK3 mark. Phosphoserine is present on Ser-19. EF-hand domains follow at residues 24-59 (TQIQ…LGRV), 94-129 (DPEE…QAER), and 130-165 (FSKE…GEEK). Residues Asp-37, Asn-39, Asp-41, and Asp-48 each contribute to the Ca(2+) site. Thr-52 bears the Phosphothreonine mark.

As to quaternary structure, myosin is a hexamer of 2 heavy chains and 4 light chains. Interacts with MYOC. Post-translationally, N-terminus is methylated by METTL11A/NTM1. In terms of processing, phosphorylated by MYLK3 and MYLK2; promotes cardiac muscle contraction and function. Dephosphorylated by PPP1CB complexed to PPP1R12B. The phosphorylated form in adult is expressed as gradients across the heart from endocardium (low phosphorylation) to epicardium (high phosphorylation); regulates cardiac torsion and workload distribution. As to expression, highly expressed in type I muscle fibers.

The protein localises to the cytoplasm. It localises to the myofibril. It is found in the sarcomere. Its subcellular location is the a band. Its function is as follows. Contractile protein that plays a role in heart development and function. Following phosphorylation, plays a role in cross-bridge cycling kinetics and cardiac muscle contraction by increasing myosin lever arm stiffness and promoting myosin head diffusion; as a consequence of the increase in maximum contraction force and calcium sensitivity of contraction force. These events altogether slow down myosin kinetics and prolong duty cycle resulting in accumulated myosins being cooperatively recruited to actin binding sites to sustain thin filament activation as a means to fine-tune myofilament calcium sensitivity to force. During cardiogenesis plays an early role in cardiac contractility by promoting cardiac myofibril assembly. The sequence is that of Myosin regulatory light chain 2, ventricular/cardiac muscle isoform from Homo sapiens (Human).